The primary structure comprises 120 residues: Large ribosomal subunit protein bL17 (120 aa).

It belongs to the bacterial ribosomal protein bL17 family. In terms of assembly, part of the 50S ribosomal subunit. Contacts protein L32.

The sequence is that of Large ribosomal subunit protein bL17 from Bacillus subtilis (strain 168).